The chain runs to 216 residues: Probable GTP-binding protein EngB (216 aa).

Positions glutamate 27 to glutamate 201 constitute an EngB-type G domain. Residues glycine 35–serine 42, glycine 62–leucine 66, aspartate 80–glycine 83, threonine 147–aspartate 150, and phenylalanine 180–serine 182 each bind GTP. Residues serine 42 and threonine 64 each coordinate Mg(2+).

It belongs to the TRAFAC class TrmE-Era-EngA-EngB-Septin-like GTPase superfamily. EngB GTPase family. The cofactor is Mg(2+).

Necessary for normal cell division and for the maintenance of normal septation. In Yersinia pseudotuberculosis serotype O:1b (strain IP 31758), this protein is Probable GTP-binding protein EngB.